The primary structure comprises 875 residues: Metal transporter CNNM2 (875 aa).

The Extracellular segment spans residues 1-250 (MIGCGACEPE…TKMIVGEEKK (250 aa)). Asn-112 carries N-linked (GlcNAc...) asparagine glycosylation. Positions 121–149 (TEHERRRHTPSERGLGGPAPPEPDSGPQR) are disordered. The chain crosses the membrane as a helical span at residues 251-271 (FLLPFWLQVIFISLLLCLSGM). A CNNM transmembrane domain is found at 251-431 (FLLPFWLQVI…DPYNDLVKEE (181 aa)). Residues 272–313 (FSGLNLGLMALDPMELRIVQNCGTEKEKNYAKRIEPVRRQGN) are Cytoplasmic-facing. An intramembrane region (helical) is located at residues 314–334 (YLLCSLLLGNVLVNTTLTILL). The Cytoplasmic portion of the chain corresponds to 335–338 (DDIA). A helical membrane pass occupies residues 339 to 359 (GSGLVAVVVSTIGIVIFGEIV). At 360–368 (PQAICSRHG) the chain is on the extracellular side. Residues 369 to 389 (LAVGANTIFLTKFFMMMTFPA) form a helical membrane-spanning segment. Over 390-875 (SYPVSKLLDC…NHSLHSEGAI (486 aa)) the chain is Cytoplasmic. CBS domains are found at residues 450–511 (MTPL…CTPL) and 518–584 (YNHP…ILDE). A disordered region spans residues 741 to 763 (AGSPGENKSPPRPCGLNHSDSLS). Position 761 is a phosphoserine (Ser-761).

The protein belongs to the ACDP family. Isoform 1 and isoform 2 may interact with each other. In terms of processing, the N-terminus is cleaved within the endoplasmic reticulum. The signal peptidase complex seems to be involved in the processing, but the exact cleavage site has not been identified. Widely expressed, with highest levels in kidney, lung, spleen and testis. In the kidney, predominantly expressed in the distal convoluted tubule and, at lower levels, in the connecting tubule (at protein level).

Its subcellular location is the cell membrane. Its function is as follows. Divalent metal cation transporter. Mediates transport of divalent metal cations in an order of Mg(2+) &gt; Co(2+) &gt; Mn(2+) &gt; Sr(2+) &gt; Ba(2+) &gt; Cu(2+) &gt; Fe(2+). The chain is Metal transporter CNNM2 (Cnnm2) from Mus musculus (Mouse).